The primary structure comprises 333 residues: CMP-N-acetylneuraminate-beta-galactosamide-alpha-2,3-sialyltransferase 4 (333 aa).

Residues 1–8 (MVSKSRWK) lie on the Cytoplasmic side of the membrane. Residues 9 to 26 (LLAMLALVLVVMVWYSIS) form a helical; Signal-anchor for type II membrane protein membrane-spanning segment. Topologically, residues 27–333 (REDRYIELFY…MGAIKNLTSF (307 aa)) are lumenal. N-linked (GlcNAc...) asparagine glycans are attached at residues N61, N131, N310, and N329. C120 and C273 are oxidised to a cystine.

It belongs to the glycosyltransferase 29 family. In terms of processing, the soluble form derives from the membrane form by proteolytic processing. As to expression, highly expressed in adult placenta, heart and kidney.

The protein localises to the golgi apparatus. It is found in the golgi stack membrane. Its subcellular location is the secreted. It catalyses the reaction a beta-D-galactosyl-(1-&gt;3)-N-acetyl-beta-D-galactosaminyl derivative + CMP-N-acetyl-beta-neuraminate = an N-acetyl-alpha-neuraminyl-(2-&gt;3)-beta-D-galactosyl-(1-&gt;3)-N-acetyl-beta-D-galactosaminyl derivative + CMP + H(+). It carries out the reaction a beta-D-galactosyl-(1-&gt;3)-N-acetyl-alpha-D-galactosaminyl derivative + CMP-N-acetyl-beta-neuraminate = an N-acetyl-alpha-neuraminyl-(2-&gt;3)-beta-D-galactosyl-(1-&gt;3)-N-acetyl-alpha-D-galactosaminyl derivative + CMP + H(+). The enzyme catalyses a beta-D-galactosyl-(1-&gt;4)-N-acetyl-beta-D-glucosaminyl derivative + CMP-N-acetyl-beta-neuraminate = an N-acetyl-alpha-neuraminyl-(2-&gt;3)-beta-D-galactosyl-(1-&gt;4)-N-acetyl-beta-D-glucosaminyl derivative + CMP + H(+). The catalysed reaction is a ganglioside GM1 (d18:1(4E)) + CMP-N-acetyl-beta-neuraminate = a ganglioside GD1a (d18:1(4E)) + CMP + H(+). It catalyses the reaction a ganglioside GA1 (d18:1(4E)) + CMP-N-acetyl-beta-neuraminate = a ganglioside GM1b (d18:1(4E)) + CMP + H(+). It carries out the reaction a ganglioside GT1c (d18:1(4E)) + CMP-N-acetyl-beta-neuraminate = a ganglioside GQ1c (d18:1(4E)) + CMP + H(+). The enzyme catalyses a neolactoside nLc4Cer + CMP-N-acetyl-beta-neuraminate = a neolactoside IV(3)-alpha-NeuAc-nLc4Cer + CMP + H(+). The catalysed reaction is a neolactoside nLc4Cer(d18:1(4E)) + CMP-N-acetyl-beta-neuraminate = a neolactoside IV(3)-alpha-NeuAc-nLc4Cer(d18:1(4E)) + CMP + H(+). The protein operates within protein modification; protein glycosylation. It participates in glycolipid biosynthesis. In terms of biological role, a beta-galactoside alpha2-3 sialyltransferase involved in terminal sialylation of glycoproteins and glycolipids. Catalyzes the transfer of sialic acid (N-acetyl-neuraminic acid; Neu5Ac) from the nucleotide sugar donor CMP-Neu5Ac onto acceptor Galbeta-(1-&gt;3)-GalNAc- and Galbeta-(1-&gt;4)-GlcNAc-terminated glycoconjugates through an alpha2-3 linkage. Plays a major role in hemostasis. Responsible for sialylation of plasma VWF/von Willebrand factor, preventing its recognition by asialoglycoprotein receptors (ASGPR) and subsequent clearance. Regulates ASGPR-mediated clearance of platelets. Participates in the biosynthesis of the sialyl Lewis X epitopes, both on O- and N-glycans, which are recognized by SELE/E-selectin, SELP/P-selectin and SELL/L-selectin. Essential for selectin-mediated rolling and adhesion of leukocytes during extravasation. Contributes to adhesion and transendothelial migration of neutrophils likely through terminal sialylation of CXCR2. In glycosphingolipid biosynthesis, sialylates GM1 and GA1 gangliosides to form GD1a and GM1b, respectively. Metabolizes brain c-series ganglioside GT1c forming GQ1c. Synthesizes ganglioside LM1 (IV3Neu5Ac-nLc4Cer), a major structural component of peripheral nerve myelin. In Homo sapiens (Human), this protein is CMP-N-acetylneuraminate-beta-galactosamide-alpha-2,3-sialyltransferase 4 (ST3GAL4).